The following is a 548-amino-acid chain: Frizzled-7 (548 aa).

Residues 1–19 (MFATVSLLFCLLLQPSPSA) form the signal peptide. At 20–230 (QQYHGEKGIS…EEEVRFARLW (211 aa)) the chain is on the extracellular side. One can recognise an FZ domain in the interval 31–150 (PDHGFCQPIS…HGAGEICVGQ (120 aa)). Cystine bridges form between Cys36-Cys97, Cys44-Cys90, Cys81-Cys118, Cys107-Cys147, and Cys111-Cys135. A glycan (N-linked (GlcNAc...) asparagine) is linked at Asn50. The N-linked (GlcNAc...) asparagine glycan is linked to Asn151. The chain crosses the membrane as a helical span at residues 231–251 (VGIWAILCGISTLFTVLTYLV). Topologically, residues 252–262 (DMRRFSYPERP) are cytoplasmic. Residues 263-283 (IIFLSGCYFMVAVAYTAGFLL) form a helical membrane-spanning segment. Topologically, residues 284 to 310 (EERGVCVERFSEDSYRTVAQGTKKEGC) are extracellular. The chain crosses the membrane as a helical span at residues 311–331 (TILFMILYFFGMASSIWWVIL). The Cytoplasmic portion of the chain corresponds to 332 to 353 (SLTWFLAAGMKWGHEAIEANSQ). A helical membrane pass occupies residues 354 to 374 (YFHLAAWAVPAVKTITILAMG). Residues 375–397 (QVDGDILSGVCYVGINSVDSLRG) are Extracellular-facing. A helical membrane pass occupies residues 398–418 (FVLAPLFVYLFIGTSFLLAGF). The Cytoplasmic segment spans residues 419 to 444 (VSLFRIRTIMKHDGTKTEKLEKLMVR). The chain crosses the membrane as a helical span at residues 445-465 (IGVFSVMYTVPATIVLACYFY). The Extracellular portion of the chain corresponds to 466-502 (EQAFRDTWEKTWLVQTCKGFAVPCPNYNFAPMSPDFT). Residues 503 to 523 (VFMIKYLMTMIVGITSSFWIW) traverse the membrane as a helical segment. Over 524–548 (SGKTLQSWRRFYHRLSNGGKGETAV) the chain is Cytoplasmic. The Lys-Thr-X-X-X-Trp motif, mediates interaction with the PDZ domain of Dvl family members motif lies at 526–531 (KTLQSW). Positions 546–548 (TAV) match the PDZ-binding motif.

The protein belongs to the G-protein coupled receptor Fz/Smo family. In terms of assembly, interacts with wnt11 and sdc4. The extracellular domain interacts with the extracellular domain of pcdh8/papc.

It localises to the cell membrane. Its subcellular location is the endosome membrane. In terms of biological role, receptor for Wnt proteins. Acts in both canonical and non-canonical Wnt pathways. Although different papers report differing Wnt preferences, wnt5a, wnt8b and wnt11 have been proposed as synergists. In the canonical Wnt pathway, acts via beta-catenin to promote the expression of the dorsal genes siamois, twin and nodal3 and to establish the dorsal axis of the embryo and induce dorsal mesoderm formation. In a non-canonical Wnt/planar cell polarity (PCP) pathway, acts with sdc4 and dvl2/dsh to regulate convergent extension movements in gastrulation. Triggers phosphorylation of dvl2/dsh and its translocation to the plasma membrane. In a third branch of Wnt signaling, acts in a non-canonical pathway via trimeric G proteins, and independently of dvl2/dsh, to recruit protein kinase C (PKC) to the membrane and thus activate PKC. PKC signaling controls cell sorting and tissue separation during gastrulation. The polypeptide is Frizzled-7 (Xenopus tropicalis (Western clawed frog)).